Here is a 507-residue protein sequence, read N- to C-terminus: Probable cytosol aminopeptidase (507 aa).

Positions 271 and 276 each coordinate Mn(2+). The active site involves Lys283. Asp294, Asp353, and Glu355 together coordinate Mn(2+). Arg357 is a catalytic residue.

This sequence belongs to the peptidase M17 family. Requires Mn(2+) as cofactor.

It is found in the cytoplasm. The enzyme catalyses Release of an N-terminal amino acid, Xaa-|-Yaa-, in which Xaa is preferably Leu, but may be other amino acids including Pro although not Arg or Lys, and Yaa may be Pro. Amino acid amides and methyl esters are also readily hydrolyzed, but rates on arylamides are exceedingly low.. The catalysed reaction is Release of an N-terminal amino acid, preferentially leucine, but not glutamic or aspartic acids.. Presumably involved in the processing and regular turnover of intracellular proteins. Catalyzes the removal of unsubstituted N-terminal amino acids from various peptides. The polypeptide is Probable cytosol aminopeptidase (Nitratidesulfovibrio vulgaris (strain ATCC 29579 / DSM 644 / CCUG 34227 / NCIMB 8303 / VKM B-1760 / Hildenborough) (Desulfovibrio vulgaris)).